The sequence spans 286 residues: Zinc finger protein ZAT5 (286 aa).

3 disordered regions span residues 1-28 (MMMGQDEVGSDQTQIIKGKRTKRQRSSS), 40-60 (STSSSAGGSGGERAVSDEYNS), and 131-171 (GGHR…FKVS). Residues 115–137 (YECKTCNRTFSSFQALGGHRASH) form a C2H2-type 1 zinc finger. Polar residues predominate over residues 154–171 (QPKSSASEEGQNSHFKVS). The C2H2-type 2 zinc-finger motif lies at 190–212 (HECSICGSEFTSGQALGGHMRRH).

Expressed in flowers and siliques.

The protein resides in the nucleus. In terms of biological role, probable transcription factor that may be involved in stress responses. The polypeptide is Zinc finger protein ZAT5 (ZAT5) (Arabidopsis thaliana (Mouse-ear cress)).